The sequence spans 288 residues: Aminoglycoside 6-adenylyltransferase (288 aa).

It catalyses the reaction streptomycin + ATP = 6-O-adenylylstreptomycin + diphosphate. Its function is as follows. Mediates bacterial resistance to streptomycin, is probably a streptomycin 6-adenylyltransferase. In Campylobacter jejuni, this protein is Aminoglycoside 6-adenylyltransferase.